The primary structure comprises 563 residues: 3-oxosteroid 1-dehydrogenase (563 aa).

7-36 lines the FAD pocket; the sequence is DVVVVGSGAAGMVAALVAAHRGLSTVVVEK.

It belongs to the FAD-dependent oxidoreductase 2 family. 3-oxosteroid dehydrogenase subfamily. FAD is required as a cofactor.

The enzyme catalyses a 3-oxosteroid + A = a 3-oxo-Delta(1)-steroid + AH2. It catalyses the reaction a 3-oxo-Delta(4)-steroid + A = a 3-oxo-Delta(1,4)-steroid + AH2. The catalysed reaction is 3-oxochol-4-en-22-oyl-CoA + NAD(+) = 3-oxochola-1,4-dien-22-oyl-CoA + NADH + H(+). In terms of biological role, involved in the degradation of cholesterol. Catalyzes the elimination of the C-1 and C-2 hydrogen atoms of the A-ring from the polycyclic ring structure of 3-ketosteroids. Has a clear preference for 3-ketosteroids with a saturated A-ring, displaying highest activity on 5alpha-AD (5alpha-androstane-3,17-dione) and 5alpha-T (5alpha-testosterone, also known as 17beta-hydroxy-5alpha-androstane-3-one). Is also involved in the formation of 3-keto-1,4-diene-steroid from 3-keto-4-ene-steroid. Catalyzes the conversion of 3-oxo-23,24-bisnorchol-4-en-22-oyl-coenzyme A thioester (4-BNC-CoA) to 3-oxo-23,24-bisnorchola-1,4-dien-22-oyl-coenzyme A thioester (1,4-BNC-CoA). In Mycobacterium tuberculosis (strain ATCC 25618 / H37Rv), this protein is 3-oxosteroid 1-dehydrogenase (kstD).